We begin with the raw amino-acid sequence, 338 residues long: uncharacterized protein (338 aa).

The chain crosses the membrane as a helical span at residues 20-40 (IFFTLTFSLSNLFLAICYLFL).

It localises to the membrane. This is an uncharacterized protein from Schizosaccharomyces pombe (strain 972 / ATCC 24843) (Fission yeast).